We begin with the raw amino-acid sequence, 1480 residues long: ABC transporter G family member 49 (1480 aa).

The span at 1–18 (MHTTTQATPQKSMVMTTT) shows a compositional bias: polar residues. Disordered regions lie at residues 1 to 42 (MHTT…AGSS), 60 to 81 (VSGELGGGGGGGGGGREKEDDE), and 104 to 124 (SSTRGGGSSGDVSEGGGGGAA). Composition is skewed to gly residues over residues 63 to 73 (ELGGGGGGGGG) and 107 to 123 (RGGGSSGDVSEGGGGGA). The region spanning 212–485 (LAAKLGFSHH…FESCGFKCPE (274 aa)) is the ABC transporter 1 domain. Residue 245–252 (GPPGCGKT) coordinates ATP. One can recognise an ABC transmembrane type-2 1 domain in the interval 563-775 (HLLKACFDRE…AEIGLTGNEF (213 aa)). A run of 6 helical transmembrane segments spans residues 581-601 (FLHITKAVQLGLLAIITGTVF), 619-639 (SLFYALILLMVNGIPELVMSI), 656-676 (GWAYAIPAFILKIPASLVAAL), 699-719 (LLVLFLVHTGALSLYRCVGSY), 725-745 (VGPIAATMSLLVILLFGGFLI), and 811-831 (VAALIGFILLYNIGFAIGLTI). Positions 877-1129 (ISFQDVNYYV…KVIQYFQSIP (253 aa)) constitute an ABC transporter 2 domain. 922–929 (GVTGAGKT) provides a ligand contact to ATP. The 217-residue stretch at 1202–1418 (EQFKACLWKQ…TLNLLFTTQF (217 aa)) folds into the ABC transmembrane type-2 2 domain. The next 7 membrane-spanning stretches (helical) occupy residues 1226–1246 (IVFMAFSSIIFGVLYWQQGNI), 1254–1274 (GLFTILGCMYGITIFTGINNS), 1311–1331 (IPYVLMLALLFMLIAYPTIGY), 1340–1360 (WFFYTMFCTLLYFVYFGMLIV), 1368–1388 (VASIYASSFYMTQHLLSGFVM), 1396–1416 (WWIWLYYISPMSWTLNLLFTT), and 1449–1469 (LLPLSAIILAAYPVLFAILYG).

It belongs to the ABC transporter superfamily. ABCG family. PDR (TC 3.A.1.205) subfamily.

It localises to the membrane. May be a general defense protein. The chain is ABC transporter G family member 49 from Oryza sativa subsp. japonica (Rice).